Here is a 21-residue protein sequence, read N- to C-terminus: Agglutinin beta-2 chain (21 aa).

Positions 1–10 (NEQSGKSQTV) are enriched in polar residues. Residues 1 to 21 (NEQSGKSQTVIVGPWGAQVST) form a disordered region.

This sequence belongs to the jacalin lectin family. Tetramer of four alpha chains associated with two or four beta chains.

D-galactose-specific lectin, binds the T-antigen structure Gal-beta1,3-GalNAc (Thomsen-Friedenreich-antigen-specific lectin). Potent and selective stimulant of distinct T- and B-cell functions. Shows a unique ability to specifically recognize IgA-1 from human serum. In Artocarpus integer (Jack fruit), this protein is Agglutinin beta-2 chain.